The sequence spans 298 residues: Junctional adhesion molecule A (298 aa).

An N-terminal signal peptide occupies residues 1 to 28 (MGTEARAGRRQLLVFTSVVLSSLALGRG). Ig-like V-type domains lie at 29–126 (AVYT…VQLT) and 134–227 (PTVH…EAVR). The Extracellular portion of the chain corresponds to 29–237 (AVYTSEPDVR…MEAAELNVGG (209 aa)). 2 disulfides stabilise this stretch: Cys49-Cys108 and Cys152-Cys211. Asn184 carries N-linked (GlcNAc...) asparagine glycosylation. The helical transmembrane segment at 238-258 (IVAAVLVTLILLGFLILGIWF) threads the bilayer. Residues 259–298 (AYRRGYFDRTKKGTSSKKVIYSQPAARSEGEFRQTSSFLV) lie on the Cytoplasmic side of the membrane. A phosphoserine mark is found at Ser280 and Ser286.

Belongs to the immunoglobulin superfamily. Interacts with the ninth PDZ domain of MPDZ. Interacts with the first PDZ domain of PARD3. The association between PARD3 and PARD6B probably disrupts this interaction. Interacts with ITGAL (via I-domain). Interacts with CD151. As to quaternary structure, (Microbial infection) Interacts with calicivirus capsid protein. In terms of assembly, (Microbial infection) Interacts with the orthoreovirus sigma-1 capsid protein.

It is found in the cell junction. The protein localises to the tight junction. The protein resides in the cell membrane. Its function is as follows. Seems to play a role in epithelial tight junction formation. Appears early in primordial forms of cell junctions and recruits PARD3. The association of the PARD6-PARD3 complex may prevent the interaction of PARD3 with JAM1, thereby preventing tight junction assembly. Plays a role in regulating monocyte transmigration involved in integrity of epithelial barrier. Ligand for integrin alpha-L/beta-2 involved in memory T-cell and neutrophil transmigration. Involved in platelet activation. In terms of biological role, (Microbial infection) Acts as a functional receptor for murine norovirus. (Microbial infection) In case of orthoreovirus infection, serves as receptor for the virus. The chain is Junctional adhesion molecule A (F11R) from Felis catus (Cat).